The sequence spans 254 residues: DNA repair protein RecO (254 aa).

This sequence belongs to the RecO family.

In terms of biological role, involved in DNA repair and RecF pathway recombination. The protein is DNA repair protein RecO of Gluconacetobacter diazotrophicus (strain ATCC 49037 / DSM 5601 / CCUG 37298 / CIP 103539 / LMG 7603 / PAl5).